The chain runs to 102 residues: MNKIRKGDEVIVITGKDKGKRGVVLSVGEGKVIVEGINLVKKHVKPNPMKGTTGGVEAKTMPLQISNVALVDANGKASRVGIKVEGDKKVRFLKTTGAELSA.

It belongs to the universal ribosomal protein uL24 family. As to quaternary structure, part of the 50S ribosomal subunit.

Functionally, one of two assembly initiator proteins, it binds directly to the 5'-end of the 23S rRNA, where it nucleates assembly of the 50S subunit. In terms of biological role, one of the proteins that surrounds the polypeptide exit tunnel on the outside of the subunit. The chain is Large ribosomal subunit protein uL24 from Paraburkholderia phytofirmans (strain DSM 17436 / LMG 22146 / PsJN) (Burkholderia phytofirmans).